A 90-amino-acid chain; its full sequence is Small ribosomal subunit protein bS20 (90 aa).

Belongs to the bacterial ribosomal protein bS20 family.

Its function is as follows. Binds directly to 16S ribosomal RNA. This Francisella tularensis subsp. holarctica (strain FTNF002-00 / FTA) protein is Small ribosomal subunit protein bS20.